Consider the following 196-residue polypeptide: Pyridoxal 5'-phosphate synthase subunit PdxT (196 aa).

47-49 (GES) contacts L-glutamine. The active-site Nucleophile is C79. Residues R106 and 134–135 (IR) each bind L-glutamine. Active-site charge relay system residues include H170 and E172.

This sequence belongs to the glutaminase PdxT/SNO family. In the presence of PdxS, forms a dodecamer of heterodimers. Only shows activity in the heterodimer.

The catalysed reaction is aldehydo-D-ribose 5-phosphate + D-glyceraldehyde 3-phosphate + L-glutamine = pyridoxal 5'-phosphate + L-glutamate + phosphate + 3 H2O + H(+). The enzyme catalyses L-glutamine + H2O = L-glutamate + NH4(+). It functions in the pathway cofactor biosynthesis; pyridoxal 5'-phosphate biosynthesis. Its function is as follows. Catalyzes the hydrolysis of glutamine to glutamate and ammonia as part of the biosynthesis of pyridoxal 5'-phosphate. The resulting ammonia molecule is channeled to the active site of PdxS. The chain is Pyridoxal 5'-phosphate synthase subunit PdxT from Bacillus cereus (strain Q1).